A 307-amino-acid polypeptide reads, in one-letter code: MLVVGSELQSDAQQLSAEAPRHGELQYLRQVEHILRCGFKKEDRTGTGTLSVFGMQARYSLRDEFPLLTTKRVFWKGVLEELLWFIKGSTNAKELSSKGVRIWDANGSRDFLDSLGFSARQEGDLGPVYGFQWRHFGAEYKDMDSDYSGQGVDQLQKVIDTIKTNPDDRRIIMCAWNPKDLPLMALPPCHALCQFYVVNGELSCQLYQRSGDMGLGVPFNIASYALLTYMIAHITGLQPGDFVHTLGDAHIYLNHIEPLKIQLQREPRPFPKLKILRKVETIDDFKVEDFQIEGYNPHPTIKMEMAV.

Arg44 lines the dUMP pocket. At Ser108 the chain carries Phosphoserine. DUMP-binding positions include 169-170 (RR), 189-190 (CH), 209-212 (RSGD), Asn220, and 250-252 (HIY). Cys189 serves as the catalytic Nucleophile. Residue Asp212 coordinates (6R)-5,10-methylene-5,6,7,8-tetrahydrofolate. Residues Lys286 and Lys302 each participate in a glycyl lysine isopeptide (Lys-Gly) (interchain with G-Cter in SUMO2) cross-link. Position 306 (Ala306) interacts with (6R)-5,10-methylene-5,6,7,8-tetrahydrofolate.

This sequence belongs to the thymidylate synthase family. Homodimer.

The protein localises to the nucleus. It is found in the cytoplasm. The protein resides in the mitochondrion. Its subcellular location is the mitochondrion matrix. It localises to the mitochondrion inner membrane. It carries out the reaction dUMP + (6R)-5,10-methylene-5,6,7,8-tetrahydrofolate = 7,8-dihydrofolate + dTMP. The protein operates within pyrimidine metabolism; dTTP biosynthesis. Its function is as follows. Catalyzes the reductive methylation of 2'-deoxyuridine 5'-monophosphate (dUMP) to thymidine 5'-monophosphate (dTMP), using the cosubstrate, 5,10- methylenetetrahydrofolate (CH2H4folate) as a 1-carbon donor and reductant and contributes to the de novo mitochondrial thymidylate biosynthesis pathway. The chain is Thymidylate synthase (Tyms) from Mus musculus (Mouse).